Here is a 139-residue protein sequence, read N- to C-terminus: uncharacterized protein (139 aa).

This is an uncharacterized protein from Invertebrate iridescent virus 6 (IIV-6).